The sequence spans 363 residues: Flagellar P-ring protein (363 aa).

A signal peptide spans Met-1–Ala-20.

This sequence belongs to the FlgI family. As to quaternary structure, the basal body constitutes a major portion of the flagellar organelle and consists of four rings (L,P,S, and M) mounted on a central rod.

It is found in the periplasm. It localises to the bacterial flagellum basal body. Its function is as follows. Assembles around the rod to form the L-ring and probably protects the motor/basal body from shearing forces during rotation. This chain is Flagellar P-ring protein, found in Shewanella sp. (strain MR-7).